The following is a 344-amino-acid chain: Dihydroorotase (344 aa).

Residues H14 and H16 each coordinate Zn(2+). Residues 16 to 18 (HLR) and N42 each bind substrate. Zn(2+)-binding residues include K100, H137, and H175. At K100 the chain carries N6-carboxylysine. H137 contributes to the substrate binding site. Position 220 (L220) interacts with substrate. D248 serves as a coordination point for Zn(2+). D248 is a catalytic residue. Positions 252 and 264 each coordinate substrate.

This sequence belongs to the metallo-dependent hydrolases superfamily. DHOase family. Class II DHOase subfamily. Homodimer. Zn(2+) serves as cofactor.

The catalysed reaction is (S)-dihydroorotate + H2O = N-carbamoyl-L-aspartate + H(+). It functions in the pathway pyrimidine metabolism; UMP biosynthesis via de novo pathway; (S)-dihydroorotate from bicarbonate: step 3/3. In terms of biological role, catalyzes the reversible cyclization of carbamoyl aspartate to dihydroorotate. In Cupriavidus necator (strain ATCC 17699 / DSM 428 / KCTC 22496 / NCIMB 10442 / H16 / Stanier 337) (Ralstonia eutropha), this protein is Dihydroorotase.